Here is a 456-residue protein sequence, read N- to C-terminus: Glycerol-3-phosphate acyltransferase 4 (456 aa).

Residues 1–37 (MFLLLPFDSLIVSLLGISLTVLFTLLLVFIIVPAVFG) form the signal peptide. The next 2 membrane-spanning stretches (helical) occupy residues 156–176 (ISLR…CLLL) and 180–200 (IALA…VGYL). A glycan (N-linked (GlcNAc...) asparagine) is linked at Asn247. An HXXXXD motif motif is present at residues 248–253 (HTSPID). Asn327, Asn328, and Asn362 each carry an N-linked (GlcNAc...) asparagine glycan.

This sequence belongs to the 1-acyl-sn-glycerol-3-phosphate acyltransferase family.

The protein localises to the endoplasmic reticulum membrane. The catalysed reaction is sn-glycerol 3-phosphate + an acyl-CoA = a 1-acyl-sn-glycero-3-phosphate + CoA. The enzyme catalyses dodecanoyl-CoA + sn-glycerol 3-phosphate = 1-dodecanoyl-sn-glycerol 3-phosphate + CoA. It catalyses the reaction sn-glycerol 3-phosphate + hexadecanoyl-CoA = 1-hexadecanoyl-sn-glycero-3-phosphate + CoA. It carries out the reaction sn-glycerol 3-phosphate + octadecanoyl-CoA = 1-octadecanoyl-sn-glycero-3-phosphate + CoA. The catalysed reaction is sn-glycerol 3-phosphate + (9Z)-octadecenoyl-CoA = 1-(9Z-octadecenoyl)-sn-glycero-3-phosphate + CoA. The enzyme catalyses (9Z,12Z)-octadecadienoyl-CoA + sn-glycerol 3-phosphate = 1-(9Z,12Z)-octadecadienoyl-sn-glycero-3-phosphate + CoA. Its pathway is phospholipid metabolism; CDP-diacylglycerol biosynthesis; CDP-diacylglycerol from sn-glycerol 3-phosphate: step 1/3. Its function is as follows. Converts glycerol-3-phosphate to 1-acyl-sn-glycerol-3-phosphate (lysophosphatidic acid or LPA) by incorporating an acyl moiety at the sn-1 position of the glycerol backbone. Active against both saturated and unsaturated long-chain fatty acyl-CoAs. Protects cells against lipotoxicity. The polypeptide is Glycerol-3-phosphate acyltransferase 4 (Bos taurus (Bovine)).